A 490-amino-acid polypeptide reads, in one-letter code: Betaine aldehyde dehydrogenase (490 aa).

A K(+)-binding site is contributed by N93. 150 to 152 (GAW) is a binding site for NAD(+). Residue K162 is the Charge relay system of the active site. 176 to 179 (KPSE) is an NAD(+) binding site. V180 serves as a coordination point for K(+). An NAD(+)-binding site is contributed by 230–233 (GTAT). L246 is a K(+) binding site. E252 acts as the Proton acceptor in catalysis. 3 residues coordinate NAD(+): G254, C286, and E387. C286 functions as the Nucleophile in the catalytic mechanism. Cysteine sulfenic acid (-SOH) is present on C286. K(+) contacts are provided by K457 and G460. E464 serves as the catalytic Charge relay system.

The protein belongs to the aldehyde dehydrogenase family. In terms of assembly, dimer of dimers. It depends on K(+) as a cofactor.

It catalyses the reaction betaine aldehyde + NAD(+) + H2O = glycine betaine + NADH + 2 H(+). Its pathway is amine and polyamine biosynthesis; betaine biosynthesis via choline pathway; betaine from betaine aldehyde: step 1/1. Its function is as follows. Involved in the biosynthesis of the osmoprotectant glycine betaine. Catalyzes the irreversible oxidation of betaine aldehyde to the corresponding acid. The sequence is that of Betaine aldehyde dehydrogenase from Xanthomonas campestris pv. campestris (strain ATCC 33913 / DSM 3586 / NCPPB 528 / LMG 568 / P 25).